Reading from the N-terminus, the 406-residue chain is Imidazolonepropionase (406 aa).

Residues H72 and H74 each coordinate Fe(3+). Residues H72 and H74 each contribute to the Zn(2+) site. R81, Y144, and H177 together coordinate 4-imidazolone-5-propanoate. Residue Y144 participates in N-formimidoyl-L-glutamate binding. H242 provides a ligand contact to Fe(3+). H242 provides a ligand contact to Zn(2+). Residue Q245 participates in 4-imidazolone-5-propanoate binding. D317 is a Fe(3+) binding site. Residue D317 participates in Zn(2+) binding. N319 and G321 together coordinate N-formimidoyl-L-glutamate. 4-imidazolone-5-propanoate is bound at residue T322.

It belongs to the metallo-dependent hydrolases superfamily. HutI family. Zn(2+) serves as cofactor. Requires Fe(3+) as cofactor.

Its subcellular location is the cytoplasm. It carries out the reaction 4-imidazolone-5-propanoate + H2O = N-formimidoyl-L-glutamate. Its pathway is amino-acid degradation; L-histidine degradation into L-glutamate; N-formimidoyl-L-glutamate from L-histidine: step 3/3. Catalyzes the hydrolytic cleavage of the carbon-nitrogen bond in imidazolone-5-propanoate to yield N-formimidoyl-L-glutamate. It is the third step in the universal histidine degradation pathway. This Yersinia pestis bv. Antiqua (strain Antiqua) protein is Imidazolonepropionase.